Here is a 485-residue protein sequence, read N- to C-terminus: Aspartyl/glutamyl-tRNA(Asn/Gln) amidotransferase subunit B (485 aa).

The protein belongs to the GatB/GatE family. GatB subfamily. Heterotrimer of A, B and C subunits.

It catalyses the reaction L-glutamyl-tRNA(Gln) + L-glutamine + ATP + H2O = L-glutaminyl-tRNA(Gln) + L-glutamate + ADP + phosphate + H(+). The catalysed reaction is L-aspartyl-tRNA(Asn) + L-glutamine + ATP + H2O = L-asparaginyl-tRNA(Asn) + L-glutamate + ADP + phosphate + 2 H(+). In terms of biological role, allows the formation of correctly charged Asn-tRNA(Asn) or Gln-tRNA(Gln) through the transamidation of misacylated Asp-tRNA(Asn) or Glu-tRNA(Gln) in organisms which lack either or both of asparaginyl-tRNA or glutaminyl-tRNA synthetases. The reaction takes place in the presence of glutamine and ATP through an activated phospho-Asp-tRNA(Asn) or phospho-Glu-tRNA(Gln). The protein is Aspartyl/glutamyl-tRNA(Asn/Gln) amidotransferase subunit B of Bordetella avium (strain 197N).